A 435-amino-acid chain; its full sequence is Adenylosuccinate lyase (435 aa).

N(6)-(1,2-dicarboxyethyl)-AMP contacts are provided by residues 4–5 (RY), 73–75 (RHD), and 99–100 (TS). H147 serves as the catalytic Proton donor/acceptor. Q218 is a N(6)-(1,2-dicarboxyethyl)-AMP binding site. S268 acts as the Proton donor/acceptor in catalysis. Residues S269, 274 to 276 (KKN), N282, and 313 to 317 (SAERV) each bind N(6)-(1,2-dicarboxyethyl)-AMP.

It belongs to the lyase 1 family. Adenylosuccinate lyase subfamily. In terms of assembly, homotetramer. Residues from neighboring subunits contribute catalytic and substrate-binding residues to each active site.

It catalyses the reaction N(6)-(1,2-dicarboxyethyl)-AMP = fumarate + AMP. It carries out the reaction (2S)-2-[5-amino-1-(5-phospho-beta-D-ribosyl)imidazole-4-carboxamido]succinate = 5-amino-1-(5-phospho-beta-D-ribosyl)imidazole-4-carboxamide + fumarate. It participates in purine metabolism; AMP biosynthesis via de novo pathway; AMP from IMP: step 2/2. Its pathway is purine metabolism; IMP biosynthesis via de novo pathway; 5-amino-1-(5-phospho-D-ribosyl)imidazole-4-carboxamide from 5-amino-1-(5-phospho-D-ribosyl)imidazole-4-carboxylate: step 2/2. Functionally, catalyzes two reactions in de novo purine nucleotide biosynthesis. Catalyzes the breakdown of 5-aminoimidazole- (N-succinylocarboxamide) ribotide (SAICAR or 2-[5-amino-1-(5-phospho-beta-D-ribosyl)imidazole-4-carboxamido]succinate) to 5-aminoimidazole-4-carboxamide ribotide (AICAR or 5-amino-1-(5-phospho-beta-D-ribosyl)imidazole-4-carboxamide) and fumarate, and of adenylosuccinate (ADS or N(6)-(1,2-dicarboxyethyl)-AMP) to adenosine monophosphate (AMP) and fumarate. This Deinococcus radiodurans (strain ATCC 13939 / DSM 20539 / JCM 16871 / CCUG 27074 / LMG 4051 / NBRC 15346 / NCIMB 9279 / VKM B-1422 / R1) protein is Adenylosuccinate lyase (purB).